The primary structure comprises 513 residues: Probable mannosyl-oligosaccharide alpha-1,2-mannosidase 1B (513 aa).

A signal peptide spans 1 to 21 (MHLSSLSLSLTALAIVSPSAA). N-linked (GlcNAc...) asparagine glycans are attached at residues Asn97, Asn117, Asn184, Asn251, Asn322, Asn348, and Asn368. Cysteines 334 and 363 form a disulfide. The Proton donor role is filled by Glu377. Thr503 is a binding site for Ca(2+).

The protein belongs to the glycosyl hydrolase 47 family. In terms of assembly, monomer. Requires Ca(2+) as cofactor. Mg(2+) is required as a cofactor.

The protein localises to the cytoplasmic vesicle lumen. It catalyses the reaction N(4)-(alpha-D-Man-(1-&gt;2)-alpha-D-Man-(1-&gt;2)-alpha-D-Man-(1-&gt;3)-[alpha-D-Man-(1-&gt;2)-alpha-D-Man-(1-&gt;3)-[alpha-D-Man-(1-&gt;2)-alpha-D-Man-(1-&gt;6)]-alpha-D-Man-(1-&gt;6)]-beta-D-Man-(1-&gt;4)-beta-D-GlcNAc-(1-&gt;4)-beta-D-GlcNAc)-L-asparaginyl-[protein] (N-glucan mannose isomer 9A1,2,3B1,2,3) + 4 H2O = N(4)-(alpha-D-Man-(1-&gt;3)-[alpha-D-Man-(1-&gt;3)-[alpha-D-Man-(1-&gt;6)]-alpha-D-Man-(1-&gt;6)]-beta-D-Man-(1-&gt;4)-beta-D-GlcNAc-(1-&gt;4)-beta-D-GlcNAc)-L-asparaginyl-[protein] (N-glucan mannose isomer 5A1,2) + 4 beta-D-mannose. The enzyme catalyses N(4)-(alpha-D-Man-(1-&gt;2)-alpha-D-Man-(1-&gt;2)-alpha-D-Man-(1-&gt;3)-[alpha-D-Man-(1-&gt;3)-[alpha-D-Man-(1-&gt;2)-alpha-D-Man-(1-&gt;6)]-alpha-D-Man-(1-&gt;6)]-beta-D-Man-(1-&gt;4)-beta-D-GlcNAc-(1-&gt;4)-beta-D-GlcNAc)-L-asparaginyl-[protein] (N-glucan mannose isomer 8A1,2,3B1,3) + 3 H2O = N(4)-(alpha-D-Man-(1-&gt;3)-[alpha-D-Man-(1-&gt;3)-[alpha-D-Man-(1-&gt;6)]-alpha-D-Man-(1-&gt;6)]-beta-D-Man-(1-&gt;4)-beta-D-GlcNAc-(1-&gt;4)-beta-D-GlcNAc)-L-asparaginyl-[protein] (N-glucan mannose isomer 5A1,2) + 3 beta-D-mannose. Its pathway is protein modification; protein glycosylation. Involved in the maturation of Asn-linked oligosaccharides. Progressively trims alpha-1,2-linked mannose residues from Man(9)GlcNAc(2) to produce Man(5)GlcNAc(2). This is Probable mannosyl-oligosaccharide alpha-1,2-mannosidase 1B (mns1B) from Aspergillus niger (strain ATCC MYA-4892 / CBS 513.88 / FGSC A1513).